The primary structure comprises 125 residues: Small ribosomal subunit protein bS6 (125 aa).

A disordered region spans residues P101–A125.

The protein belongs to the bacterial ribosomal protein bS6 family.

Functionally, binds together with bS18 to 16S ribosomal RNA. The chain is Small ribosomal subunit protein bS6 from Laribacter hongkongensis (strain HLHK9).